The primary structure comprises 1581 residues: Calmodulin-regulated spectrin-associated protein 1 (1581 aa).

The Calponin-homology (CH) domain occupies 215–330; the sequence is ESPAHQKVRY…FIAELFWWFE (116 aa). A phosphoserine mark is found at Ser216, Ser370, Ser374, and Ser415. Residues 351–399 are disordered; the sequence is VLQQKSSRPPVPISNATKRSFLGSPAAMSPADQPPSTQPLAEGSHRYHL. Residues 424-470 form a disordered region; the sequence is RQKQQKVSQTEEIPDQRHRSNSLTRVDGQPRGAIGAWPDKKNRPVSQ. Phosphothreonine is present on Thr511. A phosphoserine mark is found at Ser550, Ser553, Ser560, Ser572, and Ser586. Residues 603 to 617 show a composition bias toward basic and acidic residues; sequence KQITTKEDERGEGRP. A disordered region spans residues 603-649; the sequence is KQITTKEDERGEGRPRTIMAKRPSEGSQPMVRKKVSGGHGSRDLNRT. Residues Ser626, Ser718, Ser724, Ser734, and Ser736 each carry the phosphoserine modification. Residues 765 to 785 show a composition bias toward basic and acidic residues; that stretch reads ESAKLQEDMKVKEHEDKDDAS. Disordered regions lie at residues 765 to 803 and 821 to 866; these read ESAKLQEDMKVKEHEDKDDASGRSSPCLSTTSQLSSMSM and LNSC…SKDP. Low complexity-rich tracts occupy residues 792–803 and 826–837; these read LSTTSQLSSMSM and TKSSTSSSQKTT. A compositionally biased stretch (basic and acidic residues) spans 853-865; it reads QKREQSPGRHSKD. Residues 867-888 form a sufficient for interaction with SPTBN1 region; that stretch reads ASLLASELVQLHMQLEEKRRAI. Coiled coils occupy residues 869-905 and 1005-1037; these read LLASELVQLHMQLEEKRRAIEAQKKKMEALSARQRLK and DVNECDLSIEKLNETISTLQQAILKISQQQEQL. Positions 899-918 are sufficient for interaction with calmodulin; it reads SARQRLKLGKAAFLHVVKKG. Disordered regions lie at residues 1064–1143, 1225–1251, 1288–1315, and 1332–1428; these read FVEP…ELPE, PDEDGEVVGHESSVELGGDSDQKPGVG, QLEAEVELKRDEARRKAEEDRLRKEEEK, and QALE…DWET. A Phosphoserine modification is found at Ser1069. The span at 1092–1103 shows a compositional bias: basic and acidic residues; the sequence is RPAELKVPKDRQ. The span at 1104–1132 shows a compositional bias: polar residues; the sequence is QGCSRSKTPTPSVETLPQSRSLPPSTHPR. Phosphoserine is present on Ser1133. Residues 1225–1237 are compositionally biased toward basic and acidic residues; sequence PDEDGEVVGHESS. A coiled-coil region spans residues 1265–1336; it reads AKKRAAFLLK…RRKQQQALEE (72 aa). Residues 1342–1353 show a composition bias toward basic residues; the sequence is PKSKPKKPRPKS. Polar residues predominate over residues 1361 to 1372; that stretch reads SDSGTKCSSTHN. The segment covering 1373-1390 has biased composition (low complexity); that stretch reads LSQTHSGSSLSLASAATT. Phosphoserine is present on residues Ser1378 and Ser1407. The region spanning 1443 to 1576 is the CKK domain; that stretch reads GPKLFKEPSS…QPKRPTVPKK (134 aa). Tyr1516 is modified (phosphotyrosine).

It belongs to the CAMSAP1 family. As to quaternary structure, interacts with spectrin via SPTBN1; the interaction is direct. Interacts with calmodulin; calcium-dependent it prevents interaction with spectrin. Expressed in the central nervous system.

The protein resides in the cytoplasm. It is found in the cytoskeleton. Functionally, key microtubule-organizing protein that specifically binds the minus-end of non-centrosomal microtubules and regulates their dynamics and organization. Specifically recognizes growing microtubule minus-ends and stabilizes microtubules. Acts on free microtubule minus-ends that are not capped by microtubule-nucleating proteins or other factors and protects microtubule minus-ends from depolymerization. In contrast to CAMSAP2 and CAMSAP3, tracks along the growing tips of minus-end microtubules without significantly affecting the polymerization rate: binds at the very tip of the microtubules minus-end and acts as a minus-end tracking protein (-TIP) that dissociates from microtubules after allowing tubulin incorporation. Through interaction with spectrin may regulate neurite outgrowth. This Mus musculus (Mouse) protein is Calmodulin-regulated spectrin-associated protein 1 (Camsap1).